Reading from the N-terminus, the 99-residue chain is Aspartyl/glutamyl-tRNA(Asn/Gln) amidotransferase subunit C (99 aa).

This sequence belongs to the GatC family. In terms of assembly, heterotrimer of A, B and C subunits.

The catalysed reaction is L-glutamyl-tRNA(Gln) + L-glutamine + ATP + H2O = L-glutaminyl-tRNA(Gln) + L-glutamate + ADP + phosphate + H(+). It catalyses the reaction L-aspartyl-tRNA(Asn) + L-glutamine + ATP + H2O = L-asparaginyl-tRNA(Asn) + L-glutamate + ADP + phosphate + 2 H(+). Allows the formation of correctly charged Asn-tRNA(Asn) or Gln-tRNA(Gln) through the transamidation of misacylated Asp-tRNA(Asn) or Glu-tRNA(Gln) in organisms which lack either or both of asparaginyl-tRNA or glutaminyl-tRNA synthetases. The reaction takes place in the presence of glutamine and ATP through an activated phospho-Asp-tRNA(Asn) or phospho-Glu-tRNA(Gln). The protein is Aspartyl/glutamyl-tRNA(Asn/Gln) amidotransferase subunit C of Delftia acidovorans (strain DSM 14801 / SPH-1).